Consider the following 143-residue polypeptide: Large ribosomal subunit protein uL11 (143 aa).

Belongs to the universal ribosomal protein uL11 family. In terms of assembly, part of the ribosomal stalk of the 50S ribosomal subunit. Interacts with L10 and the large rRNA to form the base of the stalk. L10 forms an elongated spine to which L12 dimers bind in a sequential fashion forming a multimeric L10(L12)X complex. One or more lysine residues are methylated.

Functionally, forms part of the ribosomal stalk which helps the ribosome interact with GTP-bound translation factors. The polypeptide is Large ribosomal subunit protein uL11 (Cupriavidus pinatubonensis (strain JMP 134 / LMG 1197) (Cupriavidus necator (strain JMP 134))).